We begin with the raw amino-acid sequence, 429 residues long: Phosphomethylpyrimidine synthase (429 aa).

Substrate is bound by residues N66, M95, Y124, H163, 185 to 187 (SRG), 226 to 229 (DAMR), and E265. H269 provides a ligand contact to Zn(2+). Y292 contacts substrate. H333 is a binding site for Zn(2+). 3 residues coordinate [4Fe-4S] cluster: C409, C412, and C416.

Belongs to the ThiC family. [4Fe-4S] cluster serves as cofactor.

The catalysed reaction is 5-amino-1-(5-phospho-beta-D-ribosyl)imidazole + S-adenosyl-L-methionine = 4-amino-2-methyl-5-(phosphooxymethyl)pyrimidine + CO + 5'-deoxyadenosine + formate + L-methionine + 3 H(+). Its pathway is cofactor biosynthesis; thiamine diphosphate biosynthesis. Catalyzes the synthesis of the hydroxymethylpyrimidine phosphate (HMP-P) moiety of thiamine from aminoimidazole ribotide (AIR) in a radical S-adenosyl-L-methionine (SAM)-dependent reaction. The polypeptide is Phosphomethylpyrimidine synthase (Methanopyrus kandleri (strain AV19 / DSM 6324 / JCM 9639 / NBRC 100938)).